Reading from the N-terminus, the 327-residue chain is Transcription factor bHLH71 (327 aa).

2 disordered regions span residues isoleucine 46–methionine 88 and alanine 151–serine 176. Over residues arginine 65 to valine 76 the composition is skewed to basic residues. The span at cysteine 77–methionine 88 shows a compositional bias: basic and acidic residues. Residues asparagine 85–leucine 136 enclose the bHLH domain. Residues lysine 152–glutamine 169 show a composition bias toward polar residues.

In terms of assembly, homodimer. Interacts with FAMA. As to expression, expressed in leaves, stems, and flowers.

It is found in the nucleus. Functionally, transcription factor. May be involved in the differentiation of stomatal guard cells. The protein is Transcription factor bHLH71 (BHLH71) of Arabidopsis thaliana (Mouse-ear cress).